A 99-amino-acid polypeptide reads, in one-letter code: Small ribosomal subunit protein uS14m (99 aa).

Belongs to the universal ribosomal protein uS14 family.

It is found in the mitochondrion. This chain is Small ribosomal subunit protein uS14m (RPS14), found in Marchantia polymorpha (Common liverwort).